Here is a 1042-residue protein sequence, read N- to C-terminus: MTEDSRTILLIGSGPIQIGQAAEFDYSGAQACRALQEEGARVVLVNSNPATIMTDPEMADAVYIEPIEPDAIAEVIEQEDPDGVIAGLGGQTGLNVTAALAEQGVLDEHDVDVMGTPLDTIYATEDRDLFRQRMADLGQPVPASTTIALGDDETATDIDEGALRERVDDAVEAVGGLPVIARTTYTLGGSGSGVVHDFEALVDRVRTGLRLSRNAEVLVTESITGWVELEYEVMRDAGDSCIIVCNMENIDPMGIHTGESTVVTPSQIIPDDGHQEMRNAAVAVIRELGIQGGCNIQFAWRDDGTPGGEYRVVEVNPRVSRSSALASKATGYPIARVTAKVALGKRLHEIDNEITGQTTAAFEPAIDYVVTKVPRWPNDKFPEVDFELSTAMKSTGEAMAIGRTFEESLLKALRSSEYDPSVDWATVSDDELAADYLQRPSPDRPYAVFEAFERGFTVGDVNDHTGFREWYLQRFQNVAAASAAASEGDVATPAALGYTNSAVAALASDGGDVAVDDVAATAPERTFKQVDTCAGEFAASTPYYYSARSQGSTGSDVRADRDAHSVVIVGGGPIRIGQGVEFDYCTVHAVRALREAGIDAHVVNNNPETVSTDYDTSDGLFFEPITAEEVADVVEATNADGVMVQFGGQTSVDVGAPLEAELERRGLDCEIMGTDVDAMDLAEDRDRFNRLLDERDISQPDGGSATSVAGALELAAEVGYPVLVRPSYVLGGRAMEIVHDDDELRRYVEEAVRVSPEKPVLVDEFLADAVELDVDAVSDGEDVLVGGVMEHIESAGVHSGDSACVIPPRGLGDDILARVREVTTEIARALDTVGLLNVQLAVQDGEVYVLEANPRSSRTVPFVSKATGVPIAKLAAKVMAGESLADLDASEGVPEQYSVKEVVLPFDRLPGSDPRLGPEMKSTGEVMGTASDPGMAYWKAQVAASNAPVPGSTAVVDLLVEGLGERFEVVTVKDVPAAIRRGEVEFLVSDDRDALTAAVEAEIPYVSTVAAAEAMREGIAAADGAREAMPVADRPVNDETWG.

The carboxyphosphate synthetic domain stretch occupies residues 1–417 (MTEDSRTILL…SLLKALRSSE (417 aa)). Residues R127, R182, G188, G189, E221, I223, E228, G254, I255, H256, Q297, and E314 each contribute to the ATP site. Residues 131–343 (RQRMADLGQP…IARVTAKVAL (213 aa)) enclose the ATP-grasp 1 domain. Residues Q297, E314, and N316 each coordinate Mg(2+). Mn(2+) is bound by residues Q297, E314, and N316. An oligomerization domain region spans residues 418–558 (YDPSVDWATV…SQGSTGSDVR (141 aa)). Positions 559–947 (ADRDAHSVVI…WKAQVAASNA (389 aa)) are carbamoyl phosphate synthetic domain. The 192-residue stretch at 689 to 880 (NRLLDERDIS…IAKLAAKVMA (192 aa)) folds into the ATP-grasp 2 domain. 10 residues coordinate ATP: R725, E764, L766, E771, G796, V797, H798, S799, Q839, and E851. Mg(2+) is bound by residues Q839, E851, and N853. Residues Q839, E851, and N853 each coordinate Mn(2+). The 96-residue stretch at 947 to 1042 (APVPGSTAVV…DRPVNDETWG (96 aa)) folds into the MGS-like domain. An allosteric domain region spans residues 948 to 1042 (PVPGSTAVVD…DRPVNDETWG (95 aa)).

Belongs to the CarB family. Composed of two chains; the small (or glutamine) chain promotes the hydrolysis of glutamine to ammonia, which is used by the large (or ammonia) chain to synthesize carbamoyl phosphate. Tetramer of heterodimers (alpha,beta)4. The cofactor is Mg(2+). Requires Mn(2+) as cofactor.

The enzyme catalyses hydrogencarbonate + L-glutamine + 2 ATP + H2O = carbamoyl phosphate + L-glutamate + 2 ADP + phosphate + 2 H(+). The catalysed reaction is hydrogencarbonate + NH4(+) + 2 ATP = carbamoyl phosphate + 2 ADP + phosphate + 2 H(+). It functions in the pathway amino-acid biosynthesis; L-arginine biosynthesis; carbamoyl phosphate from bicarbonate: step 1/1. The protein operates within pyrimidine metabolism; UMP biosynthesis via de novo pathway; (S)-dihydroorotate from bicarbonate: step 1/3. Its function is as follows. Large subunit of the glutamine-dependent carbamoyl phosphate synthetase (CPSase). CPSase catalyzes the formation of carbamoyl phosphate from the ammonia moiety of glutamine, carbonate, and phosphate donated by ATP, constituting the first step of 2 biosynthetic pathways, one leading to arginine and/or urea and the other to pyrimidine nucleotides. The large subunit (synthetase) binds the substrates ammonia (free or transferred from glutamine from the small subunit), hydrogencarbonate and ATP and carries out an ATP-coupled ligase reaction, activating hydrogencarbonate by forming carboxy phosphate which reacts with ammonia to form carbamoyl phosphate. The sequence is that of Carbamoyl phosphate synthase large chain from Halobacterium salinarum (strain ATCC 700922 / JCM 11081 / NRC-1) (Halobacterium halobium).